The sequence spans 291 residues: N-acetylmannosamine kinase (291 aa).

ATP is bound by residues 5–12 (AIDIGGTK) and 132–139 (GVGGGVVS). Zn(2+)-binding residues include histidine 156, cysteine 166, cysteine 168, and cysteine 173.

This sequence belongs to the ROK (NagC/XylR) family. NanK subfamily. Homodimer.

The enzyme catalyses an N-acyl-D-mannosamine + ATP = an N-acyl-D-mannosamine 6-phosphate + ADP + H(+). Its pathway is amino-sugar metabolism; N-acetylneuraminate degradation; D-fructose 6-phosphate from N-acetylneuraminate: step 2/5. In terms of biological role, catalyzes the phosphorylation of N-acetylmannosamine (ManNAc) to ManNAc-6-P. The polypeptide is N-acetylmannosamine kinase (Escherichia coli O1:K1 / APEC).